We begin with the raw amino-acid sequence, 195 residues long: NADH-ubiquinone oxidoreductase subunit 9 (195 aa).

The protein belongs to the complex I 30 kDa subunit family. In terms of assembly, complex I is composed of about 30 different subunits.

It localises to the mitochondrion inner membrane. The catalysed reaction is a ubiquinone + NADH + 5 H(+)(in) = a ubiquinol + NAD(+) + 4 H(+)(out). Core subunit of the mitochondrial membrane respiratory chain NADH dehydrogenase (Complex I) that is believed to belong to the minimal assembly required for catalysis. Complex I functions in the transfer of electrons from NADH to the respiratory chain. The immediate electron acceptor for the enzyme is believed to be ubiquinone. In Acanthamoeba castellanii (Amoeba), this protein is NADH-ubiquinone oxidoreductase subunit 9 (NAD9).